The chain runs to 169 residues: Disulfide bond formation protein B (169 aa).

Residues 1 to 14 lie on the Cytoplasmic side of the membrane; that stretch reads MNNLTLSLHRERRL. Residues 15-31 traverse the membrane as a helical segment; the sequence is LVLLGLVCLALLAGALY. The Periplasmic segment spans residues 32–49; it reads LQYVKNEDPCPLCIIQRY. A disulfide bridge connects residues C41 and C44. Residues 50-64 traverse the membrane as a helical segment; that stretch reads FFVLIAVFAFIGAGM. The Cytoplasmic portion of the chain corresponds to 65–71; sequence ASGAGIA. A helical transmembrane segment spans residues 72–89; the sequence is VIEALIVLSAAAGVGTAA. The Periplasmic portion of the chain corresponds to 90 to 144; it reads RHLYVQLNPGFSCGFDALQPVVDSLPPAHWLPGVFKVAGLCETVYPPIFGILLPG. C102 and C130 are joined by a disulfide. The helical transmembrane segment at 145–163 threads the bilayer; sequence WALIAFALIVVPVAASLLR. Topologically, residues 164–169 are cytoplasmic; it reads HRGRLR.

The protein belongs to the DsbB family.

It is found in the cell inner membrane. Required for disulfide bond formation in some periplasmic proteins. Acts by oxidizing the DsbA protein. The polypeptide is Disulfide bond formation protein B (Burkholderia thailandensis (strain ATCC 700388 / DSM 13276 / CCUG 48851 / CIP 106301 / E264)).